Here is a 164-residue protein sequence, read N- to C-terminus: Neurotrophin-3 (164 aa).

The signal sequence occupies residues 1–3 (IQS). The propeptide occupies 4–118 (TSMDQGBLSE…GLNRTSRRKR (115 aa)). The segment at 89 to 126 (LLSENTPLEPPPLYLTEEPMGLNRTSRRKRFAEGKSHR) is disordered. A glycan (N-linked (GlcNAc...) asparagine) is linked at Asn111.

The protein belongs to the NGF-beta family.

The protein localises to the secreted. In terms of biological role, seems to promote the survival of visceral and proprioceptive sensory neurons. In Cylindrophis ruffus (Red-tailed pipe snake), this protein is Neurotrophin-3 (NTF3).